An 875-amino-acid polypeptide reads, in one-letter code: Alanine--tRNA ligase (875 aa).

Zn(2+)-binding residues include His564, His568, Cys666, and His670.

It belongs to the class-II aminoacyl-tRNA synthetase family. It depends on Zn(2+) as a cofactor.

The protein localises to the cytoplasm. It carries out the reaction tRNA(Ala) + L-alanine + ATP = L-alanyl-tRNA(Ala) + AMP + diphosphate. Its function is as follows. Catalyzes the attachment of alanine to tRNA(Ala) in a two-step reaction: alanine is first activated by ATP to form Ala-AMP and then transferred to the acceptor end of tRNA(Ala). Also edits incorrectly charged Ser-tRNA(Ala) and Gly-tRNA(Ala) via its editing domain. The sequence is that of Alanine--tRNA ligase from Mannheimia succiniciproducens (strain KCTC 0769BP / MBEL55E).